We begin with the raw amino-acid sequence, 269 residues long: Homocitrate synthase subunit alpha (269 aa).

The region spanning 3–255 (INIVDTTLRD…IYTGDFEDII (253 aa)) is the Pyruvate carboxyltransferase domain.

The protein belongs to the alpha-IPM synthase/homocitrate synthase family. As to quaternary structure, heterodimer of an alpha and an omega chain.

It catalyses the reaction acetyl-CoA + 2-oxoglutarate + H2O = (2R)-homocitrate + CoA + H(+). In terms of biological role, this protein is a Fe-Mo-cofactor biosynthetic component. In Clostridium pasteurianum, this protein is Homocitrate synthase subunit alpha (nifV-ALPHA).